The following is a 527-amino-acid chain: GMP synthase [glutamine-hydrolyzing] (527 aa).

A Glutamine amidotransferase type-1 domain is found at 13-202 (TILVLDFGSQ…AVDICGAAQK (190 aa)). Residue C89 is the Nucleophile of the active site. Catalysis depends on residues H176 and E178. Positions 203–402 (WSMENFVDTE…MGIPHDLVWR (200 aa)) constitute a GMPS ATP-PPase domain. ATP is bound at residue 231–237 (SGGVDST). Residues R304, D464, K519, and E525 each coordinate XMP.

In terms of assembly, homodimer. It depends on Mg(2+) as a cofactor.

It localises to the cytoplasm. The protein resides in the cytosol. It carries out the reaction XMP + L-glutamine + ATP + H2O = GMP + L-glutamate + AMP + diphosphate + 2 H(+). It participates in purine metabolism; GMP biosynthesis; GMP from XMP (L-Gln route): step 1/1. Catalyzes the conversion of xanthine monophosphate (XMP) to GMP in the presence of glutamine and ATP through an adenyl-XMP intermediate. In Yarrowia lipolytica (strain CLIB 122 / E 150) (Yeast), this protein is GMP synthase [glutamine-hydrolyzing] (GUA1).